The primary structure comprises 72 residues: Bowman-Birk type trypsin inhibitor (72 aa).

Intrachain disulfides connect cysteine 12–cysteine 66, cysteine 13–cysteine 28, cysteine 16–cysteine 62, cysteine 18–cysteine 26, cysteine 36–cysteine 43, cysteine 40–cysteine 55, and cysteine 45–cysteine 53.

The protein belongs to the Bowman-Birk serine protease inhibitor family.

This Vigna radiata var. radiata (Mung bean) protein is Bowman-Birk type trypsin inhibitor.